The sequence spans 505 residues: Serine/threonine-protein kinase D (505 aa).

A Protein kinase domain is found at 9-271 (YEIVKSLGSG…AMYQALHSLI (263 aa)). ATP contacts are provided by residues 15-23 (LGSGGFGDT) and K40. D136 acts as the Proton acceptor in catalysis. Residues 436 to 505 (GASATIGGIP…GWIASQLVNF (70 aa)) form the SH3b domain.

This sequence belongs to the protein kinase superfamily. Ser/Thr protein kinase family.

It catalyses the reaction L-seryl-[protein] + ATP = O-phospho-L-seryl-[protein] + ADP + H(+). The enzyme catalyses L-threonyl-[protein] + ATP = O-phospho-L-threonyl-[protein] + ADP + H(+). The polypeptide is Serine/threonine-protein kinase D (spkD) (Synechocystis sp. (strain ATCC 27184 / PCC 6803 / Kazusa)).